The primary structure comprises 122 residues: Holo-[acyl-carrier-protein] synthase (122 aa).

Residues aspartate 8 and glutamate 56 each contribute to the Mg(2+) site.

This sequence belongs to the P-Pant transferase superfamily. AcpS family. The cofactor is Mg(2+).

Its subcellular location is the cytoplasm. It carries out the reaction apo-[ACP] + CoA = holo-[ACP] + adenosine 3',5'-bisphosphate + H(+). Its function is as follows. Transfers the 4'-phosphopantetheine moiety from coenzyme A to a Ser of acyl-carrier-protein. This chain is Holo-[acyl-carrier-protein] synthase, found in Streptomyces griseus subsp. griseus (strain JCM 4626 / CBS 651.72 / NBRC 13350 / KCC S-0626 / ISP 5235).